A 286-amino-acid chain; its full sequence is Putative 2-aminoethylphosphonate transport system permease protein PhnU (286 aa).

Helical transmembrane passes span 19-39 (WLLL…SLIV), 76-96 (FFAT…LVFI), 111-131 (FIAL…GSAG), 150-170 (FLYS…PLVM), 202-222 (VIFP…LLLT), and 254-274 (YTVA…LFSL). Residues 68-275 (LLNTLQIAFF…VLSLGLFSLY (208 aa)) form the ABC transmembrane type-1 domain.

It belongs to the binding-protein-dependent transport system permease family.

It is found in the cell inner membrane. Its function is as follows. Probably part of the PhnSTUV complex (TC 3.A.1.11.5) involved in 2-aminoethylphosphonate import. Probably responsible for the translocation of the substrate across the membrane. This Salmonella typhimurium (strain LT2 / SGSC1412 / ATCC 700720) protein is Putative 2-aminoethylphosphonate transport system permease protein PhnU (phnU).